The following is a 266-amino-acid chain: Putative carbamate hydrolase RutD (266 aa).

This sequence belongs to the AB hydrolase superfamily. Hydrolase RutD family.

The enzyme catalyses carbamate + 2 H(+) = NH4(+) + CO2. Involved in pyrimidine catabolism. May facilitate the hydrolysis of carbamate, a reaction that can also occur spontaneously. This is Putative carbamate hydrolase RutD from Escherichia coli (strain B / BL21-DE3).